Consider the following 209-residue polypeptide: Ubiquitin-conjugating enzyme E2 S (209 aa).

Residues 14–160 enclose the UBC core domain; the sequence is QTIRQVMREL…ARMMTEIHAQ (147 aa). C98 functions as the Glycyl thioester intermediate in the catalytic mechanism. Positions 165–194 are disordered; sequence GVGAASDAKDDDGPSTKKHAGLDKKLQDKK. A compositionally biased stretch (basic and acidic residues) spans 171–194; that stretch reads DAKDDDGPSTKKHAGLDKKLQDKK.

Belongs to the ubiquitin-conjugating enzyme family.

It catalyses the reaction S-ubiquitinyl-[E1 ubiquitin-activating enzyme]-L-cysteine + [E2 ubiquitin-conjugating enzyme]-L-cysteine = [E1 ubiquitin-activating enzyme]-L-cysteine + S-ubiquitinyl-[E2 ubiquitin-conjugating enzyme]-L-cysteine.. It participates in protein modification; protein ubiquitination. In terms of biological role, catalyzes the covalent attachment of ubiquitin to other proteins. Acts as an essential factor of the anaphase promoting complex/cyclosome (APC/C), a cell cycle-regulated ubiquitin ligase that controls progression through mitosis. Acts by specifically elongating polyubiquitin chains initiated by the E2 enzyme vih/UbcH10 on APC/C substrates, enhancing the degradation of APC/C substrates by the proteasome and promoting mitotic exit. In Drosophila persimilis (Fruit fly), this protein is Ubiquitin-conjugating enzyme E2 S.